Consider the following 142-residue polypeptide: Glutamate-rich protein 2 (142 aa).

2 disordered regions span residues 1–55 (MSKN…HAPL) and 104–142 (EKAQ…CEDG). Over residues 9 to 27 (EQEKNNEHCPEDINDKLSE) the composition is skewed to basic and acidic residues. Over residues 28-43 (STDDDGEDTSDEDKEE) the composition is skewed to acidic residues. Basic and acidic residues predominate over residues 44-53 (DSNPNKDTHA). Positions 109–142 (LEEDDDESEEDNSESEGESTEDPSEESSDECEDG) are enriched in acidic residues.

The sequence is that of Glutamate-rich protein 2 (ERICH2) from Bos taurus (Bovine).